Consider the following 385-residue polypeptide: 8-amino-7-oxononanoate synthase (385 aa).

Residue Arg21 coordinates substrate. 108-109 contributes to the pyridoxal 5'-phosphate binding site; sequence GY. His133 is a binding site for substrate. 3 residues coordinate pyridoxal 5'-phosphate: Ser179, His207, and Thr233. The residue at position 236 (Lys236) is an N6-(pyridoxal phosphate)lysine. Thr350 contacts substrate.

This sequence belongs to the class-II pyridoxal-phosphate-dependent aminotransferase family. BioF subfamily. In terms of assembly, homodimer. Requires pyridoxal 5'-phosphate as cofactor.

The catalysed reaction is 6-carboxyhexanoyl-[ACP] + L-alanine + H(+) = (8S)-8-amino-7-oxononanoate + holo-[ACP] + CO2. It functions in the pathway cofactor biosynthesis; biotin biosynthesis. Its function is as follows. Catalyzes the decarboxylative condensation of pimeloyl-[acyl-carrier protein] and L-alanine to produce 8-amino-7-oxononanoate (AON), [acyl-carrier protein], and carbon dioxide. This chain is 8-amino-7-oxononanoate synthase, found in Pectobacterium atrosepticum (strain SCRI 1043 / ATCC BAA-672) (Erwinia carotovora subsp. atroseptica).